Consider the following 242-residue polypeptide: MPSCDGNALVIFSGGQDSTTCLGWALNRFRTVATIGFHYGQRHDVEMQCRQDVLAAIGDVRPGWKAHLGTDTVVEMGLFRELGETALTHDVAIEMGRNGLPSTFVPGRNLMFLTAAAACAYRQGIRHLVLGVCETDFSGYPDCRDDAMKAMQVALNLGMESRFVVHTPLMWLTKAQTWDMARDEGGQDFVELVLERSHTCYKGVRDVRHPWGYGCGTCPACELRRAGWDAYVAGHAVHGEGR.

12–22 is a binding site for ATP; the sequence is FSGGQDSTTCL. Cys200, Cys215, Cys218, and Cys221 together coordinate Zn(2+).

This sequence belongs to the QueC family. Zn(2+) is required as a cofactor.

It carries out the reaction 7-carboxy-7-deazaguanine + NH4(+) + ATP = 7-cyano-7-deazaguanine + ADP + phosphate + H2O + H(+). The protein operates within purine metabolism; 7-cyano-7-deazaguanine biosynthesis. Its function is as follows. Catalyzes the ATP-dependent conversion of 7-carboxy-7-deazaguanine (CDG) to 7-cyano-7-deazaguanine (preQ(0)). The sequence is that of 7-cyano-7-deazaguanine synthase from Nitratidesulfovibrio vulgaris (strain ATCC 29579 / DSM 644 / CCUG 34227 / NCIMB 8303 / VKM B-1760 / Hildenborough) (Desulfovibrio vulgaris).